The primary structure comprises 200 residues: GTP-dependent dephospho-CoA kinase (200 aa).

GTP contacts are provided by D56, V57, V58, D75, and E132.

The protein belongs to the GTP-dependent DPCK family.

It carries out the reaction 3'-dephospho-CoA + GTP = GDP + CoA + H(+). It functions in the pathway cofactor biosynthesis; coenzyme A biosynthesis. Functionally, catalyzes the GTP-dependent phosphorylation of the 3'-hydroxyl group of dephosphocoenzyme A to form coenzyme A (CoA). The chain is GTP-dependent dephospho-CoA kinase from Caldivirga maquilingensis (strain ATCC 700844 / DSM 13496 / JCM 10307 / IC-167).